The primary structure comprises 489 residues: Bifunctional protein HldE (489 aa).

Positions 1–328 are ribokinase; sequence METENIHSFD…ELKAQLQDQP (328 aa). Residue 206 to 209 coordinates ATP; the sequence is NKKE. The active site involves aspartate 276. The tract at residues 357 to 489 is cytidylyltransferase; it reads LTNGCFDLLH…IIQDIRNGRG (133 aa).

The protein in the N-terminal section; belongs to the carbohydrate kinase PfkB family. In the C-terminal section; belongs to the cytidylyltransferase family. In terms of assembly, homodimer.

The catalysed reaction is D-glycero-beta-D-manno-heptose 7-phosphate + ATP = D-glycero-beta-D-manno-heptose 1,7-bisphosphate + ADP + H(+). It carries out the reaction D-glycero-beta-D-manno-heptose 1-phosphate + ATP + H(+) = ADP-D-glycero-beta-D-manno-heptose + diphosphate. It participates in nucleotide-sugar biosynthesis; ADP-L-glycero-beta-D-manno-heptose biosynthesis; ADP-L-glycero-beta-D-manno-heptose from D-glycero-beta-D-manno-heptose 7-phosphate: step 1/4. Its pathway is nucleotide-sugar biosynthesis; ADP-L-glycero-beta-D-manno-heptose biosynthesis; ADP-L-glycero-beta-D-manno-heptose from D-glycero-beta-D-manno-heptose 7-phosphate: step 3/4. Functionally, catalyzes the phosphorylation of D-glycero-D-manno-heptose 7-phosphate at the C-1 position to selectively form D-glycero-beta-D-manno-heptose-1,7-bisphosphate. Catalyzes the ADP transfer from ATP to D-glycero-beta-D-manno-heptose 1-phosphate, yielding ADP-D-glycero-beta-D-manno-heptose. This chain is Bifunctional protein HldE, found in Desulfatibacillum aliphaticivorans.